A 147-amino-acid polypeptide reads, in one-letter code: Acidic phospholipase A2 beta-bungarotoxin A4 chain (147 aa).

A signal peptide spans 1-19 (MNPAHLLVLSAVCVSLLGA). Positions 20 to 27 (ANIPPQHL) are excised as a propeptide. Cystine bridges form between Cys54-Cys146, Cys56-Cys72, Cys71-Cys127, Cys78-Cys120, Cys88-Cys113, and Cys106-Cys118. Ca(2+) is bound by residues Tyr55, Gly57, and Gly59. His75 is an active-site residue. Residue Asp76 participates in Ca(2+) binding. Asp121 is a catalytic residue.

It belongs to the phospholipase A2 family. Group I subfamily. D49 sub-subfamily. As to quaternary structure, heterodimer; disulfide-linked. The A chains have phospholipase A2 activity and the B chains show homology with the basic protease inhibitors. The cofactor is Ca(2+). As to expression, expressed by the venom gland.

It localises to the secreted. The enzyme catalyses a 1,2-diacyl-sn-glycero-3-phosphocholine + H2O = a 1-acyl-sn-glycero-3-phosphocholine + a fatty acid + H(+). Functionally, snake venom phospholipase A2 (PLA2) that inhibits neuromuscular transmission by blocking acetylcholine release from the nerve termini. PLA2 catalyzes the calcium-dependent hydrolysis of the 2-acyl groups in 3-sn-phosphoglycerides. This chain is Acidic phospholipase A2 beta-bungarotoxin A4 chain, found in Bungarus multicinctus (Many-banded krait).